The following is a 142-amino-acid chain: Protein OrfX1 (142 aa).

The protein belongs to the TULIP P47 family. In terms of assembly, orfX1 was not detected as part of a crude toxin extract that includes BoNTA2/NTNH, P47, OrfX2 and OrfX3.

Its function is as follows. Part of a botulinum neurotoxin type A2 (BoNT) locus; may be part of a progenitor toxin complex required to protect BoNT during its passage through the host gastrointestinal tract. Binds phosphatidylinositol (3,4) bisphosphate, phosphatidylethanolamine and phosphatidylserine. The chain is Protein OrfX1 (orfX1) from Clostridium botulinum (strain Kyoto / Type A2).